The primary structure comprises 1091 residues: AP-3 complex subunit beta-1 (1091 aa).

Disordered stretches follow at residues 1 to 32 (MSGN…SPSG) and 267 to 290 (EDNE…KKKP). Positions 267 to 288 (EDNEKNFYESDDEQKEKTDQKK) are enriched in basic and acidic residues. 2 positions are modified to phosphoserine: Ser276 and Ser609. The interval 664-807 (AGKAKKENPA…EKEKKTKEDR (144 aa)) is disordered. Residues 667-678 (AKKENPARKFYS) show a composition bias toward basic and acidic residues. 2 stretches are compositionally biased toward acidic residues: residues 679-695 (DSEE…DSES) and 703-718 (EQDE…SEDS). Residues 719–736 (SSEHRSDSESVSEVGDKR) show a composition bias toward basic and acidic residues. Phosphoserine is present on residues Ser748 and Ser750. The segment covering 763–775 (SDSSSTDSSSVEE) has biased composition (low complexity). A compositionally biased stretch (acidic residues) spans 776–789 (SSSDSESESESESE). Positions 790–807 (SESKKVTMEKEKKTKEDR) are enriched in basic and acidic residues.

This sequence belongs to the adaptor complexes large subunit family. Adaptor protein complex 3 (AP-3) is a heterotetramer composed of two large adaptins (delta-type subunit AP3D1 and beta-type subunit AP3B1 or AP3B2), a medium adaptin (mu-type subunit AP3M1 or AP3M2) and a small adaptin (sigma-type subunit APS1 or AP3S2). AP-3 associates with the BLOC-1 complex. Interacts with KIF3A; interaction is direct; interaction is impaired by pyrophosphorylation of AP3B1. Post-translationally, phosphorylated on serine residues. In terms of processing, pyrophosphorylation by 5-diphosphoinositol pentakisphosphate (5-IP7) impairs interaction with KIF3A. Serine pyrophosphorylation is achieved by Mg(2+)-dependent, but enzyme independent transfer of a beta-phosphate from a inositol pyrophosphate to a pre-phosphorylated serine residue.

It localises to the cytoplasmic vesicle. It is found in the clathrin-coated vesicle membrane. The protein localises to the golgi apparatus. Functionally, subunit of non-clathrin- and clathrin-associated adaptor protein complex 3 (AP-3) that plays a role in protein sorting in the late-Golgi/trans-Golgi network (TGN) and/or endosomes. The AP complexes mediate both the recruitment of clathrin to membranes and the recognition of sorting signals within the cytosolic tails of transmembrane cargo molecules. AP-3 appears to be involved in the sorting of a subset of transmembrane proteins targeted to lysosomes and lysosome-related organelles. In concert with the BLOC-1 complex, AP-3 is required to target cargos into vesicles assembled at cell bodies for delivery into neurites and nerve terminals. The sequence is that of AP-3 complex subunit beta-1 (AP3B1) from Canis lupus familiaris (Dog).